A 216-amino-acid polypeptide reads, in one-letter code: FMN-dependent NADH:quinone oxidoreductase 2 (216 aa).

Residues Ser-9, 15 to 17 (SVS), 96 to 99 (MYNF), and 140 to 143 (SRGG) contribute to the FMN site.

This sequence belongs to the azoreductase type 1 family. In terms of assembly, homodimer. FMN is required as a cofactor.

The enzyme catalyses 2 a quinone + NADH + H(+) = 2 a 1,4-benzosemiquinone + NAD(+). It catalyses the reaction N,N-dimethyl-1,4-phenylenediamine + anthranilate + 2 NAD(+) = 2-(4-dimethylaminophenyl)diazenylbenzoate + 2 NADH + 2 H(+). Functionally, quinone reductase that provides resistance to thiol-specific stress caused by electrophilic quinones. In terms of biological role, also exhibits azoreductase activity. Catalyzes the reductive cleavage of the azo bond in aromatic azo compounds to the corresponding amines. The sequence is that of FMN-dependent NADH:quinone oxidoreductase 2 from Xanthomonas euvesicatoria pv. vesicatoria (strain 85-10) (Xanthomonas campestris pv. vesicatoria).